Consider the following 216-residue polypeptide: Small ribosomal subunit protein uS3 (216 aa).

One can recognise a KH type-2 domain in the interval 38–108 (LREFVKKKLH…DLAIDIQEVK (71 aa)).

It belongs to the universal ribosomal protein uS3 family. As to quaternary structure, part of the 30S ribosomal subunit. Forms a tight complex with proteins S10 and S14.

Its function is as follows. Binds the lower part of the 30S subunit head. Binds mRNA in the 70S ribosome, positioning it for translation. This chain is Small ribosomal subunit protein uS3, found in Desulfosudis oleivorans (strain DSM 6200 / JCM 39069 / Hxd3) (Desulfococcus oleovorans).